Consider the following 577-residue polypeptide: MNIQALLSEKVRQAMIAAGAPADCEPQVRQSAKVQFGDYQANGMMAVAKKLGMAPRQLAEQVLTHLDLNGIASKVEIAGPGFINIFLDPAFLAEHVQQALASDRLGVATPEKQTIVVDYSAPNVAKEMHVGHLRSTIIGDAAVRTLEFLGHKVIRANHVGDWGTQFGMLIAWLEKQQQENAGEMELADLEGFYRDAKKHYDEDEEFAERARNYVVKLQSGDEYFREMWRKLVDITMTQNQITYDRLNVTLTRDDVMGESLYNPMLPGIVADLKAKGLAVESEGATVVFLDEFKNKEGEPMGVIIQKKDGGYLYTTTDIACAKYRYETLHAERVLYYIDSRQHQHLMQAWAIVRKAGYVPESVPLEHHMFGMMLGKDGKPFKTRAGGTVKLADLLDEALERARRLVAEKNPDMSADELEKLANAVGIGAVKYADLSKNRTTDYIFDWDNMLAFEGNTAPYMQYAYTRVLSVFRKAEIDEEQLAAAPVIIREDREAQLAARLLQFEETLTVVAREGTPHVMCAYLYDLAGLFSGFYEHCPILSAENEEVRNSRLKLAQLTAKTLKLGLDTLGIETVERM.

Residues 122–132 (PNVAKEMHVGH) carry the 'HIGH' region motif.

It belongs to the class-I aminoacyl-tRNA synthetase family. Monomer.

The protein localises to the cytoplasm. It carries out the reaction tRNA(Arg) + L-arginine + ATP = L-arginyl-tRNA(Arg) + AMP + diphosphate. This Shigella dysenteriae serotype 1 (strain Sd197) protein is Arginine--tRNA ligase.